The following is a 290-amino-acid chain: MDIVFEKVEHVYNARSPLARRALYDVNVAIRSGAYVAVVGHTGSGKSTLLQHLNGLLQPTSGAVKIGEETITSHKRPKQLKPLRKKVGVVFQFPEHQLFEETVEKDICFGPLNFGVPEDEAKRKARELIKLVGLSEDVLAKSPFDLSGGQMRRVAIAGVLALEPEVLVLDEPTAGLDPRGRKEMMEMFYRLHREKQLTTVLVTHSMEDAARYADEIIVMHEGTVWGHGTPEEMFRDADKLAAIGLSVPETVKLKQQLEKRFGVVIPSPCLTLEQTAEAIQQLFSKVSVHD.

An ABC transporter domain is found at 6-246 (EKVEHVYNAR…ADKLAAIGLS (241 aa)). 40–47 (GHTGSGKS) contributes to the ATP binding site.

The protein belongs to the ABC transporter superfamily. Energy-coupling factor EcfA family. In terms of assembly, forms a stable energy-coupling factor (ECF) transporter complex composed of 2 membrane-embedded substrate-binding proteins (S component), 2 ATP-binding proteins (A component) and 2 transmembrane proteins (T component).

The protein localises to the cell membrane. In terms of biological role, ATP-binding (A) component of a common energy-coupling factor (ECF) ABC-transporter complex. Unlike classic ABC transporters this ECF transporter provides the energy necessary to transport a number of different substrates. The chain is Energy-coupling factor transporter ATP-binding protein EcfA2 from Geobacillus kaustophilus (strain HTA426).